The primary structure comprises 1372 residues: Collagen alpha-2(I) chain (1372 aa).

Residues 1 to 22 (MLSFVDTRTLLLLAVTSCLATC) form the signal peptide. A Pyrrolidone carboxylic acid modification is found at Gln23. A propeptide spans 23-85 (QYLQSGSVRK…PPGLTGNFAA (63 aa)) (N-terminal propeptide). Residues 28 to 1135 (GSVRKGPTGD…DQPRSQPSLR (1108 aa)) are disordered. The span at 59–77 (MGPPGPPGSPGPPGSPAPP) shows a compositional bias: pro residues. Allysine is present on Lys90. Residues 95 to 146 (GPGPMGLMGPRGPPGAVGAPGPQGFQGPAGEPGEPGQTGPAGPRGPAGSPGK) show a composition bias toward low complexity. A compositionally biased stretch (basic and acidic residues) spans 147–161 (AGEDGHPGKPGRPGE). A 5-hydroxylysine; alternate modification is found at Lys183. A glycan (O-linked (Gal...) hydroxylysine; alternate) is linked at Lys183. Low complexity-rich tracts occupy residues 231 to 260 (VGAP…SAGP), 285 to 299 (AGPR…LSGP), 306 to 327 (PGTN…AGAP), 336 to 351 (PGPA…RGLV), 390 to 416 (PGEA…LPGA), 476 to 495 (LPGI…RGEA), and 519 to 537 (PGLA…NGAQ). Positions 544-553 (GVQGGKGEQG) are enriched in gly residues. The segment covering 600 to 639 (PGESGAAGPSGPIGSRGPSGAPGPDGNKGEAGAVGAPGSA) has biased composition (low complexity). Residues 640 to 649 (GASGPGGLPG) show a composition bias toward gly residues. Composition is skewed to low complexity over residues 681 to 716 (RGIP…PRGS) and 725 to 743 (PAGP…QPGA). Basic and acidic residues predominate over residues 744–753 (KGEKGTKGPK). Over residues 755 to 771 (ENGIVGPTGSVGAAGPS) the composition is skewed to low complexity. Residues 781-790 (GSRGDGGPPG) show a composition bias toward gly residues. 5 stretches are compositionally biased toward low complexity: residues 792 to 801 (TGFPGAAGRT), 855 to 882 (SGEP…LGLP), 905 to 927 (ISGP…NGAP), 957 to 978 (PGSI…VGPA), and 987 to 1007 (PGPA…PSGP). Over residues 1011–1022 (RGDKGEPGDKGH) the composition is skewed to basic and acidic residues. Positions 1095–1107 (AGPPGPPGPPGPP) are enriched in pro residues. A propeptide spans 1126-1372 (DQPRSQPSLR…RVEVGPVCFK (247 aa)) (C-terminal propeptide). Residues 1139-1372 (YEVDATLKSL…RVEVGPVCFK (234 aa)) form the Fibrillar collagen NC1 domain. Disulfide bonds link Cys1169–Cys1201, Cys1209–Cys1370, and Cys1278–Cys1323. Ca(2+) contacts are provided by Asp1187, Asn1189, Gln1190, Cys1192, and Asp1195. Asn1273 carries N-linked (GlcNAc...) asparagine glycosylation.

This sequence belongs to the fibrillar collagen family. In terms of assembly, trimers of one alpha 2(I) and two alpha 1(I) chains. Interacts (via C-terminus) with TMEM131 (via PapD-L domain); the interaction is direct and is involved in assembly and TRAPPIII ER-to-Golgi transport complex-dependent secretion of collagen. Prolines at the third position of the tripeptide repeating unit (G-X-Y) are hydroxylated in some or all of the chains. In terms of tissue distribution, expressed in kidney glomeruli.

The protein resides in the secreted. It is found in the extracellular space. It localises to the extracellular matrix. Functionally, type I collagen is a member of group I collagen (fibrillar forming collagen). The protein is Collagen alpha-2(I) chain (Col1a2) of Mus musculus (Mouse).